Here is a 97-residue protein sequence, read N- to C-terminus: MTSSPVSRVVYNGKRPASNTRSPSSNEIFTPAHEENVRFIYEAWQCVERDLRNQVSGMDRGVVEEYVEKNPSNSLKSFKPIDLNDLKRRTVQDPKKS.

Disordered regions lie at residues 1-29 (MTSS…NEIF) and 72-97 (SNSL…PKKS). Residues 17–28 (ASNTRSPSSNEI) show a composition bias toward polar residues. The span at 82 to 97 (DLNDLKRRTVQDPKKS) shows a compositional bias: basic and acidic residues.

It belongs to the MCRIP family.

Its subcellular location is the nucleus. The protein localises to the cytoplasm. It is found in the stress granule. Functionally, may play a role in the regulation of the epithelial-mesenchymal transition. The polypeptide is Mapk-regulated corepressor-interacting protein 1 (Mcrip1) (Xenopus tropicalis (Western clawed frog)).